A 199-amino-acid chain; its full sequence is Inner membrane-spanning protein YciB (199 aa).

5 helical membrane-spanning segments follow: residues 3 to 23, 47 to 67, 76 to 96, 119 to 139, and 149 to 169; these read LLID…WGIY, VEPM…ATLL, WKPS…QLVF, LNWS…VIAY, and FKLF…AIYM. The disordered stretch occupies residues 180-199; sequence AAAATPDALPPPGVQQDKQP.

This sequence belongs to the YciB family.

It is found in the cell inner membrane. Its function is as follows. Plays a role in cell envelope biogenesis, maintenance of cell envelope integrity and membrane homeostasis. This Delftia acidovorans (strain DSM 14801 / SPH-1) protein is Inner membrane-spanning protein YciB.